The following is a 96-amino-acid chain: NADH-ubiquinone oxidoreductase chain 6 (96 aa).

A run of 2 helical transmembrane segments spans residues 24-44 (MSLL…LGSI) and 48-68 (WFAY…FIYV).

This sequence belongs to the complex I subunit 6 family.

The protein resides in the mitochondrion membrane. It carries out the reaction a ubiquinone + NADH + 5 H(+)(in) = a ubiquinol + NAD(+) + 4 H(+)(out). Functionally, core subunit of the mitochondrial membrane respiratory chain NADH dehydrogenase (Complex I) that is believed to belong to the minimal assembly required for catalysis. Complex I functions in the transfer of electrons from NADH to the respiratory chain. The immediate electron acceptor for the enzyme is believed to be ubiquinone. This Albinaria turrita (Door snail) protein is NADH-ubiquinone oxidoreductase chain 6 (ND6).